A 112-amino-acid chain; its full sequence is Gastrula zinc finger protein XlCGF9.1 (112 aa).

C2H2-type zinc fingers lie at residues 6–28 (FICS…MKIH), 34–56 (FCCP…ERTH), 62–84 (FTCP…RIIH), and 90–112 (YSCP…FKIH).

Belongs to the krueppel C2H2-type zinc-finger protein family.

It localises to the nucleus. In terms of biological role, may be involved in transcriptional regulation. The sequence is that of Gastrula zinc finger protein XlCGF9.1 from Xenopus laevis (African clawed frog).